Reading from the N-terminus, the 149-residue chain is METLFSLPFTVLECPNVKLKKPSWLHMPSAMTVYAVVIVSYFLITGGIIYDVIVEPPSVGSMTDEHGHQRPVAFLAYRVNGQYIMEGLASSFLFTMGGLGFIILDRSNAPNIPKLNRFLLLFIGFVSVLLSFFMARVFMRMKLPGYLMG.

Topologically, residues M1–T32 are cytoplasmic. Residues V33–I53 form a helical membrane-spanning segment. The Extracellular portion of the chain corresponds to V54–Y83. A helical membrane pass occupies residues I84–L104. At D105 to R117 the chain is on the cytoplasmic side. The chain crosses the membrane as a helical span at residues F118 to F138. Over M139–G149 the chain is Extracellular.

This sequence belongs to the OSTC family. In terms of assembly, specific component of the STT3A-containing form of the oligosaccharyltransferase (OST) complex.

Its subcellular location is the membrane. Its pathway is protein modification; protein glycosylation. Specific component of the STT3A-containing form of the oligosaccharyl transferase (OST) complex that catalyzes the initial transfer of a defined glycan (Glc(3)Man(9)GlcNAc(2) in eukaryotes) from the lipid carrier dolichol-pyrophosphate to an asparagine residue within an Asn-X-Ser/Thr consensus motif in nascent polypeptide chains, the first step in protein N-glycosylation. N-glycosylation occurs cotranslationally and the complex associates with the Sec61 complex at the channel-forming translocon complex that mediates protein translocation across the endoplasmic reticulum (ER). All subunits are required for a maximal enzyme activity. This chain is Oligosaccharyltransferase complex subunit ostc, found in Danio rerio (Zebrafish).